The chain runs to 164 residues: Glycine cleavage system H protein, mitochondrial (164 aa).

A mitochondrion-targeting transit peptide spans 1-39; sequence MAWLVLRRLGPVLAPRCPRLSLRPQVPAVRRLGTGSLLL. Residues 57 to 139 form the Lipoyl-binding domain; it reads IGTVGISNFA…YQDGWLIKMT (83 aa). Lys98 carries the N6-lipoyllysine modification.

The protein belongs to the GcvH family. The glycine cleavage system is composed of four proteins: P (GLDC), T (GCST), L (DLD) and H (GCSH). Interacts with GLDC. Requires (R)-lipoate as cofactor.

The protein resides in the mitochondrion. In terms of biological role, the glycine cleavage system catalyzes the degradation of glycine. The H protein (GCSH) shuttles the methylamine group of glycine from the P protein (GLDC) to the T protein (GCST). Has a pivotal role in the lipoylation of enzymes involved in cellular energetics such as the mitochondrial dihydrolipoyllysine-residue acetyltransferase component of pyruvate dehydrogenase complex (DLAT), and the mitochondrial dihydrolipoyllysine-residue succinyltransferase component of 2-oxoglutarate dehydrogenase complex (DLST). This Gallus gallus (Chicken) protein is Glycine cleavage system H protein, mitochondrial.